The following is an 87-amino-acid chain: Small ribosomal subunit protein uS17 (87 aa).

It belongs to the universal ribosomal protein uS17 family. Part of the 30S ribosomal subunit.

One of the primary rRNA binding proteins, it binds specifically to the 5'-end of 16S ribosomal RNA. In Thiobacillus denitrificans (strain ATCC 25259 / T1), this protein is Small ribosomal subunit protein uS17.